The following is a 474-amino-acid chain: Siroheme synthase (474 aa).

The segment at 1 to 203 is precorrin-2 dehydrogenase /sirohydrochlorin ferrochelatase; that stretch reads MKLFPLFADL…QRPEEAERLL (203 aa). NAD(+)-binding positions include 22-23 and 43-44; these read EI and PA. Position 128 is a phosphoserine (Ser128). The uroporphyrinogen-III C-methyltransferase stretch occupies residues 216-474; that stretch reads GSVVLVGAGP…QRPAPAALAA (259 aa). Position 225 (Pro225) interacts with S-adenosyl-L-methionine. Catalysis depends on Asp248, which acts as the Proton acceptor. The active-site Proton donor is the Lys270. Residues 302–304, Ile307, 332–333, Met384, and Gly413 contribute to the S-adenosyl-L-methionine site; these read GGD and TA.

It in the N-terminal section; belongs to the precorrin-2 dehydrogenase / sirohydrochlorin ferrochelatase family. The protein in the C-terminal section; belongs to the precorrin methyltransferase family.

The enzyme catalyses uroporphyrinogen III + 2 S-adenosyl-L-methionine = precorrin-2 + 2 S-adenosyl-L-homocysteine + H(+). It carries out the reaction precorrin-2 + NAD(+) = sirohydrochlorin + NADH + 2 H(+). The catalysed reaction is siroheme + 2 H(+) = sirohydrochlorin + Fe(2+). It functions in the pathway cofactor biosynthesis; adenosylcobalamin biosynthesis; precorrin-2 from uroporphyrinogen III: step 1/1. It participates in cofactor biosynthesis; adenosylcobalamin biosynthesis; sirohydrochlorin from precorrin-2: step 1/1. Its pathway is porphyrin-containing compound metabolism; siroheme biosynthesis; precorrin-2 from uroporphyrinogen III: step 1/1. The protein operates within porphyrin-containing compound metabolism; siroheme biosynthesis; siroheme from sirohydrochlorin: step 1/1. It functions in the pathway porphyrin-containing compound metabolism; siroheme biosynthesis; sirohydrochlorin from precorrin-2: step 1/1. Multifunctional enzyme that catalyzes the SAM-dependent methylations of uroporphyrinogen III at position C-2 and C-7 to form precorrin-2 via precorrin-1. Then it catalyzes the NAD-dependent ring dehydrogenation of precorrin-2 to yield sirohydrochlorin. Finally, it catalyzes the ferrochelation of sirohydrochlorin to yield siroheme. The protein is Siroheme synthase of Bordetella petrii (strain ATCC BAA-461 / DSM 12804 / CCUG 43448).